A 442-amino-acid chain; its full sequence is GTPase Obg (442 aa).

The Obg domain maps to 1 to 158 (MFYDQARIFV…HWLELELKLL (158 aa)). One can recognise an OBG-type G domain in the interval 159–329 (ADVGLVGFPN…LIYHVHKGLE (171 aa)). Residues 165–172 (GFPNVGKS), 190–194 (FTTLE), 212–215 (DIPG), 282–285 (NKMD), and 310–312 (SAA) each bind GTP. The Mg(2+) site is built by Ser172 and Thr192. Residues 349–427 (FTGKTEERFK…IGDLDFDFIE (79 aa)) enclose the OCT domain.

This sequence belongs to the TRAFAC class OBG-HflX-like GTPase superfamily. OBG GTPase family. Monomer. It depends on Mg(2+) as a cofactor.

The protein localises to the cytoplasm. Its function is as follows. An essential GTPase which binds GTP, GDP and possibly (p)ppGpp with moderate affinity, with high nucleotide exchange rates and a fairly low GTP hydrolysis rate. Plays a role in control of the cell cycle, stress response, ribosome biogenesis and in those bacteria that undergo differentiation, in morphogenesis control. This chain is GTPase Obg, found in Heliobacterium modesticaldum (strain ATCC 51547 / Ice1).